The following is a 458-amino-acid chain: Chromosomal replication initiator protein DnaA (458 aa).

The interval 1-84 (MENIWLEAQT…FHVAEEKPEA (84 aa)) is domain I, interacts with DnaA modulators. A compositionally biased stretch (basic and acidic residues) spans 80–119 (EKPEAAHEAKPEKEAKPAREKERDKDKEKEKDREKEKKEL). Residues 80 to 120 (EKPEAAHEAKPEKEAKPAREKERDKDKEKEKDREKEKKELV) are disordered. The tract at residues 84–121 (AAHEAKPEKEAKPAREKERDKDKEKEKDREKEKKELVP) is domain II. The segment at 122–338 (NLNPKYTFES…GMLIRLEAFA (217 aa)) is domain III, AAA+ region. ATP-binding residues include G166, G168, K169, and T170. Residues 339–458 (SLTGQEITLS…VEDIRKKLFT (120 aa)) are domain IV, binds dsDNA.

The protein belongs to the DnaA family. In terms of assembly, oligomerizes as a right-handed, spiral filament on DNA at oriC.

It localises to the cytoplasm. In terms of biological role, plays an essential role in the initiation and regulation of chromosomal replication. ATP-DnaA binds to the origin of replication (oriC) to initiate formation of the DNA replication initiation complex once per cell cycle. Binds the DnaA box (a 9 base pair repeat at the origin) and separates the double-stranded (ds)DNA. Forms a right-handed helical filament on oriC DNA; dsDNA binds to the exterior of the filament while single-stranded (ss)DNA is stabiized in the filament's interior. The ATP-DnaA-oriC complex binds and stabilizes one strand of the AT-rich DNA unwinding element (DUE), permitting loading of DNA polymerase. After initiation quickly degrades to an ADP-DnaA complex that is not apt for DNA replication. Binds acidic phospholipids. The sequence is that of Chromosomal replication initiator protein DnaA from Citrifermentans bemidjiense (strain ATCC BAA-1014 / DSM 16622 / JCM 12645 / Bem) (Geobacter bemidjiensis).